A 254-amino-acid polypeptide reads, in one-letter code: Glutathione S-transferase F14 (254 aa).

The GST N-terminal domain occupies Ser-4 to Gly-85. Glutathione contacts are provided by residues Ala-42–Lys-43, Glu-56–Val-57, and Glu-69–Pro-70. One can recognise a GST C-terminal domain in the interval Asp-92–Ile-231.

This sequence belongs to the GST superfamily. Phi family.

The protein resides in the cytoplasm. Its subcellular location is the cytosol. The enzyme catalyses RX + glutathione = an S-substituted glutathione + a halide anion + H(+). In terms of biological role, may be involved in the conjugation of reduced glutathione to a wide number of exogenous and endogenous hydrophobic electrophiles and have a detoxification role against certain herbicides. The protein is Glutathione S-transferase F14 of Arabidopsis thaliana (Mouse-ear cress).